A 230-amino-acid polypeptide reads, in one-letter code: MKVLAIKLVDYREWTERLGYDREWLIQKIQNKFMMKIHEIASQYSTFPLQLRFDNFLMIVDGITNTQLIYMINDMQENLPVGIKTCLGYGKTPLEAQWNASVCLNNKEDKFKEYVDEKIAALHFDINFNTEALKYTSVYDSFLEITNIYVDLSRFLYKIGGILQYLGGDNYLGFVSTNSVNKVIEKFSDDNKIKVGIGIGQNARTAIKLATTSLEKIRNNREKTWHIEEE.

The protein belongs to the archaeal-type GTP cyclohydrolase family.

It catalyses the reaction GTP + 3 H2O = 2-amino-5-formylamino-6-(5-phospho-D-ribosylamino)pyrimidin-4(3H)-one + 2 phosphate + 2 H(+). Catalyzes the formation of 2-amino-5-formylamino-6-ribofuranosylamino-4(3H)-pyrimidinone ribonucleotide monophosphate and inorganic phosphate from GTP. Also has an independent pyrophosphate phosphohydrolase activity. The chain is GTP cyclohydrolase III from Saccharolobus islandicus (strain M.14.25 / Kamchatka #1) (Sulfolobus islandicus).